The sequence spans 115 residues: Peptidyl-tRNA hydrolase (115 aa).

Belongs to the PTH2 family.

The protein resides in the cytoplasm. The catalysed reaction is an N-acyl-L-alpha-aminoacyl-tRNA + H2O = an N-acyl-L-amino acid + a tRNA + H(+). Its function is as follows. The natural substrate for this enzyme may be peptidyl-tRNAs which drop off the ribosome during protein synthesis. This is Peptidyl-tRNA hydrolase (pth) from Nanoarchaeum equitans (strain Kin4-M).